Here is a 375-residue protein sequence, read N- to C-terminus: 23S rRNA (uracil(747)-C(5))-methyltransferase RlmC (375 aa).

The [4Fe-4S] cluster site is built by cysteine 3, cysteine 11, cysteine 14, and cysteine 87. S-adenosyl-L-methionine-binding residues include glutamine 212, phenylalanine 241, glutamate 262, and asparagine 307. Cysteine 334 serves as the catalytic Nucleophile.

Belongs to the class I-like SAM-binding methyltransferase superfamily. RNA M5U methyltransferase family. RlmC subfamily.

It catalyses the reaction uridine(747) in 23S rRNA + S-adenosyl-L-methionine = 5-methyluridine(747) in 23S rRNA + S-adenosyl-L-homocysteine + H(+). Functionally, catalyzes the formation of 5-methyl-uridine at position 747 (m5U747) in 23S rRNA. The polypeptide is 23S rRNA (uracil(747)-C(5))-methyltransferase RlmC (Escherichia coli (strain SMS-3-5 / SECEC)).